We begin with the raw amino-acid sequence, 148 residues long: Large ribosomal subunit protein bL9 (148 aa).

It belongs to the bacterial ribosomal protein bL9 family.

In terms of biological role, binds to the 23S rRNA. The chain is Large ribosomal subunit protein bL9 from Pseudomonas putida (strain W619).